A 608-amino-acid chain; its full sequence is Chaperone protein HtpG (608 aa).

An a; substrate-binding region spans residues 1 to 332; it reads MQFQTEVNQL…VEDLPLNVSR (332 aa). Residues 333 to 536 are b; sequence EILQENQILK…KNKLDFAMQQ (204 aa). The interval 537-608 is c; sequence LLKQMGQEQN…LTKIINKAFS (72 aa).

This sequence belongs to the heat shock protein 90 family. As to quaternary structure, homodimer.

It localises to the cytoplasm. In terms of biological role, molecular chaperone. Has ATPase activity. The polypeptide is Chaperone protein HtpG (Campylobacter jejuni subsp. doylei (strain ATCC BAA-1458 / RM4099 / 269.97)).